Consider the following 623-residue polypeptide: MACPLQSGFPARTNSRLDVFLRRHLPPEAYDAVRAYEPCIVVSNSENHTLKYVVLSDRLIYLTENPPKSIRRVVALRDVVAIDLIDDYPEFLSSPDGEISQHIRIIYSSTVLKKECKKSKGVRKFLFPFHHTKANNEKVKEEKNGLAFWRIKEPRSLNESPLRDQQESSTPSKNSTLCPRPGVQKLSLHGQGAFRPLPSPSRRSSQSAPATGKAVSEPSCTTNTKEPQGLPDHNNSISEIPFKCSGNGNEFYLGNSLLDSPSQSNSNLEKKESELHLYVISTTSSIFLHLKSSWNNYNIKATLLQDPFYASKFSPAIGSQKPYRSEEKIKHFSQLKSELFLKDNSLRRILPLIMELKVAAQKNFILKRLFWKTSDLFYFLVNKLHEYLPESRDKNALQNQSQRVDELVACIEIIQTLVLMFRETETESSRLNTLAAKKGTLFNLLVILISEPQIPKSCPVFDIQLVADSALVRMSFDAKLQKLILEYTNTATALLYEILLVFQQGNLGLGSRKFAISWMMSFLQSCPPIITFVASIVKQVVRGLSASFQLLTPCQAVLLYQQFYILKSCLQHSRTLAEYIKNNYREEFRYFIHMPALQKRLPLCYPITQHTTQLFHEVLKLVE.

The span at 157–166 (LNESPLRDQQ) shows a compositional bias: basic and acidic residues. The tract at residues 157–237 (LNESPLRDQQ…QGLPDHNNSI (81 aa)) is disordered. The segment covering 167 to 177 (ESSTPSKNSTL) has biased composition (polar residues). Over residues 193–210 (AFRPLPSPSRRSSQSAPA) the composition is skewed to low complexity.

This is an uncharacterized protein from Macaca fascicularis (Crab-eating macaque).